A 158-amino-acid polypeptide reads, in one-letter code: 3-hydroxyacyl-[acyl-carrier-protein] dehydratase FabZ (158 aa).

Histidine 57 is a catalytic residue.

This sequence belongs to the thioester dehydratase family. FabZ subfamily.

The protein localises to the cytoplasm. The catalysed reaction is a (3R)-hydroxyacyl-[ACP] = a (2E)-enoyl-[ACP] + H2O. In terms of biological role, involved in unsaturated fatty acids biosynthesis. Catalyzes the dehydration of short chain beta-hydroxyacyl-ACPs and long chain saturated and unsaturated beta-hydroxyacyl-ACPs. The chain is 3-hydroxyacyl-[acyl-carrier-protein] dehydratase FabZ from Anaeromyxobacter sp. (strain Fw109-5).